A 398-amino-acid chain; its full sequence is Polyferredoxin protein VhuB (398 aa).

4Fe-4S ferredoxin-type domains are found at residues 2–31 (AGIK…IAPF), 25–53 (AIEI…VENN), 54–83 (GKLI…VDDR), 82–111 (DRFP…IPGK), 123–152 (QEPI…IEDE), 152–181 (ELAV…VAGK), 191–219 (KSFT…YNRE), 220–249 (DLIV…LEVE), 259–291 (EGLV…MINQ), 300–331 (TKTD…MGKI), and 339–368 (NRIE…LTGD). Residues cysteine 11, cysteine 14, cysteine 17, cysteine 21, cysteine 34, cysteine 37, cysteine 40, cysteine 44, cysteine 63, cysteine 66, cysteine 69, cysteine 73, cysteine 91, cysteine 94, cysteine 97, cysteine 101, cysteine 132, cysteine 135, cysteine 138, cysteine 142, cysteine 161, cysteine 164, cysteine 167, cysteine 171, cysteine 199, cysteine 202, cysteine 205, cysteine 209, cysteine 229, cysteine 232, cysteine 235, cysteine 239, cysteine 268, cysteine 271, cysteine 274, cysteine 278, cysteine 311, cysteine 314, cysteine 317, cysteine 321, cysteine 348, cysteine 351, cysteine 354, cysteine 358, cysteine 377, cysteine 380, cysteine 383, and cysteine 387 each coordinate [4Fe-4S] cluster.

[4Fe-4S] cluster serves as cofactor.

This is Polyferredoxin protein VhuB (vhuB) from Methanococcus voltae.